A 451-amino-acid chain; its full sequence is Trigger factor (451 aa).

Residues 165–250 (DDKLTIDFEG…LRQIQAREAL (86 aa)) enclose the PPIase FKBP-type domain.

This sequence belongs to the FKBP-type PPIase family. Tig subfamily.

It localises to the cytoplasm. The catalysed reaction is [protein]-peptidylproline (omega=180) = [protein]-peptidylproline (omega=0). Its function is as follows. Involved in protein export. Acts as a chaperone by maintaining the newly synthesized protein in an open conformation. Functions as a peptidyl-prolyl cis-trans isomerase. In Helicobacter pylori (strain Shi470), this protein is Trigger factor.